The primary structure comprises 174 residues: V-type proton ATPase catalytic subunit A (174 aa).

This sequence belongs to the ATPase alpha/beta chains family. V-ATPase is a heteromultimeric enzyme made up of two complexes: the ATP-hydrolytic V1 complex and the proton translocation V0 complex. The V1 complex consists of three catalytic AB heterodimers that form a heterohexamer, three peripheral stalks each consisting of EG heterodimers, one central rotor including subunits D and F, and the regulatory subunits C and H. The proton translocation complex V0 consists of the proton transport subunit a, a ring of proteolipid subunits c9c'', rotary subunit d, subunits e and f, and the accessory subunits ATP6AP1/Ac45 and ATP6AP2/PRR. Interacts with the V0 complex V-ATPase subunit a4 ATP6V0A4. Interacts with WFS1. Interacts with alpha-crystallin B chain/CRYAB and with MTOR, forming a ternary complex.

It is found in the cytoplasm. Its subcellular location is the cytosol. The protein localises to the cytoplasmic vesicle. It localises to the secretory vesicle. The protein resides in the clathrin-coated vesicle membrane. It is found in the lysosome. The enzyme catalyses ATP + H2O + 4 H(+)(in) = ADP + phosphate + 5 H(+)(out). Its activity is regulated as follows. ATP hydrolysis occurs at the interface between the nucleotide-binding domains of subunits A and B. ATP hydrolysis triggers a conformational change in the subunits D and F, which induces a shift of subunit d. The c-ring is subsequently rotated and results in a continuous proton translocation across the membrane. Functionally, catalytic subunit of the V1 complex of vacuolar(H+)-ATPase (V-ATPase), a multisubunit enzyme composed of a peripheral complex (V1) that hydrolyzes ATP and a membrane integral complex (V0) that translocates protons. V-ATPase is responsible for acidifying and maintaining the pH of intracellular compartments and in some cell types, is targeted to the plasma membrane, where it is responsible for acidifying the extracellular environment. In aerobic conditions, involved in intracellular iron homeostasis, thus triggering the activity of Fe(2+) prolyl hydroxylase (PHD) enzymes, and leading to HIF1A hydroxylation and subsequent proteasomal degradation. May play a role in neurite development and synaptic connectivity. The protein is V-type proton ATPase catalytic subunit A of Mesocricetus auratus (Golden hamster).